Consider the following 143-residue polypeptide: Transcriptional regulator MraZ (143 aa).

SpoVT-AbrB domains follow at residues 5–47 (QYEH…SLEE) and 76–119 (AVEC…SKEV).

It belongs to the MraZ family. As to quaternary structure, forms oligomers.

The protein resides in the cytoplasm. It is found in the nucleoid. In Thermoanaerobacter pseudethanolicus (strain ATCC 33223 / 39E) (Clostridium thermohydrosulfuricum), this protein is Transcriptional regulator MraZ.